A 1663-amino-acid polypeptide reads, in one-letter code: Kotanin synthase (1663 aa).

Residues 19–168 form an N-terminal acylcarrier protein transacylase domain (SAT) region; it reads RPHEFSFNTQ…PLPVYGGPCH (150 aa). The 431-residue stretch at 301–731 folds into the Ketosynthase family 3 (KS3) domain; that stretch reads DSRIAVVGMS…GGNTSLLLEE (431 aa). Active-site for beta-ketoacyl synthase activity residues include Cys474, His609, and His650. Residues 830 to 1149 are malonyl-CoA:ACP transacylase (MAT) domain; the sequence is FIFSGQGSFY…SMCTLQETGV (320 aa). A product template (PT) domain region spans residues 1209-1527; sequence TALVHQIMEE…PRILMNRFFD (319 aa). The N-terminal hotdog fold stretch occupies residues 1213–1349; the sequence is HQIMEESFRP…GVVRCGDRQS (137 aa). A PKS/mFAS DH domain is found at 1213 to 1523; sequence HQIMEESFRP…LRPLPRILMN (311 aa). His1245 (proton acceptor; for dehydratase activity) is an active-site residue. The tract at residues 1376–1523 is C-terminal hotdog fold; the sequence is QASRVSRDLV…LRPLPRILMN (148 aa). Asp1434 acts as the Proton donor; for dehydratase activity in catalysis. The disordered stretch occupies residues 1544-1580; it reads DLPQVQHQPSPTTDSGPDDDPKDPNTGPLTPEVDLPV. Residues 1586–1663 enclose the Carrier domain; that stretch reads KANTKLVRGA…ELKEYLTASW (78 aa). O-(pantetheine 4'-phosphoryl)serine is present on Ser1623.

It depends on pantetheine 4'-phosphate as a cofactor.

Its pathway is secondary metabolite biosynthesis. Non-reducing polyketide synthase; part of the gene cluster that mediates the biosynthesis of the bicoumarin kotanin. The non-reducing polyketide synthase ktnS first catalyzes the formation of the pentaketidic 4,7-dihydroxy-5-methylcoumarin from acetyl coenzyme A and 4 malonyl coenzyme A molecules. Further O-methylation by ktnB leads to the formation of 7-demethylsiderin. Then, an oxidative phenol coupling catalyzed by the cytochrome P450 monooxygenase ktnC forms the 8,8'-dimer P-orlandin via dimerization the monomeric precursor, 7-demethylsiderin. P-orlandin is subsequently O-methylated in a stepwise fashion to demethylkotanin and kotanin. The sequence is that of Kotanin synthase from Aspergillus niger (strain ATCC MYA-4892 / CBS 513.88 / FGSC A1513).